Here is a 216-residue protein sequence, read N- to C-terminus: Protein Syd (216 aa).

It belongs to the Syd family.

The protein resides in the cell inner membrane. Interacts with the SecY protein in vivo. May bind preferentially to an uncomplexed state of SecY, thus functioning either as a chelating agent for excess SecY in the cell or as a regulatory factor that negatively controls the translocase function. The chain is Protein Syd from Shewanella baltica (strain OS185).